The chain runs to 350 residues: DNA-directed RNA polymerase subunit alpha (350 aa).

Residues 1-226 (MLISQRPTLS…ELFGLARELN (226 aa)) are alpha N-terminal domain (alpha-NTD). Positions 241-350 (ADQAAHFALP…NQDYAETEQL (110 aa)) are alpha C-terminal domain (alpha-CTD). The tract at residues 328 to 350 (GTWNSDAGYDLEDNQDYAETEQL) is disordered. Residues 336–350 (YDLEDNQDYAETEQL) show a composition bias toward acidic residues.

The protein belongs to the RNA polymerase alpha chain family. Homodimer. The RNAP catalytic core consists of 2 alpha, 1 beta, 1 beta' and 1 omega subunit. When a sigma factor is associated with the core the holoenzyme is formed, which can initiate transcription.

The enzyme catalyses RNA(n) + a ribonucleoside 5'-triphosphate = RNA(n+1) + diphosphate. DNA-dependent RNA polymerase catalyzes the transcription of DNA into RNA using the four ribonucleoside triphosphates as substrates. This Mycolicibacterium vanbaalenii (strain DSM 7251 / JCM 13017 / BCRC 16820 / KCTC 9966 / NRRL B-24157 / PYR-1) (Mycobacterium vanbaalenii) protein is DNA-directed RNA polymerase subunit alpha.